Here is an 813-residue protein sequence, read N- to C-terminus: Ribonuclease R (813 aa).

In terms of domain architecture, RNB spans 260 to 587 (RVDLRDLPLV…LHRAIKYLLA (328 aa)). Lysine 544 bears the N6-acetyllysine; by PatZ mark. The 82-residue stretch at 644-725 (GNVFKGVISS…DERKIDFSLI (82 aa)) folds into the S1 motif domain. A disordered region spans residues 731 to 813 (PRNVGKTARE…KRAAKKKVAE (83 aa)). Basic and acidic residues-rich tracts occupy residues 737-749 (TARE…DAGK) and 761-774 (VNFE…GEKK). The span at 775–791 (TKPKAAKKDARKAKKPS) shows a compositional bias: basic residues. Low complexity predominate over residues 792–801 (AKTQKIAAAT). Positions 802 to 813 (KAKRAAKKKVAE) are enriched in basic residues.

It belongs to the RNR ribonuclease family. RNase R subfamily. As to quaternary structure, monomer. Mg(2+) serves as cofactor. Post-translationally, acetylated at Lys-544 by PatZ during exponential growth phase. Acetylation alters RNase R structure and enhances binding of SsrA/tmRNA and SmpB, leading to instability and degradation of RNase R. Not acetylated and stable in stationary phase cells.

It is found in the cytoplasm. The enzyme catalyses Exonucleolytic cleavage in the 3'- to 5'-direction to yield nucleoside 5'-phosphates.. With respect to regulation, stimulated by the presence of a monovalent cation. Highly unstable in exponential growth phase. This instability is due to the binding of SsrA/tmRNA and its associated protein SmpB to the C-terminal region of RNase R. In contrast, RNase R becomes stabilized upon entry into stationary phase. The difference in stability between exponential and stationary phase is due to the acetylation of a single lysine residue. Its function is as follows. 3'-5' exoribonuclease that releases 5'-nucleoside monophosphates and is involved in maturation of structured RNAs (rRNAs, tRNAs and SsrA/tmRNA). In stationary phase, involved in the post-transcriptional regulation of ompA mRNA stability. Shortens RNA processively to di- and trinucleotides. In vitro, exhibits helicase activity, which is independent of its RNase activity. RNases 2 and R (rnb and this entry) contribute to rRNA degradation during starvation, while RNase R and PNPase (this entry and pnp) are the major contributors to quality control of rRNA during steady state growth. Required for the expression of virulence genes in enteroinvasive strains of E.coli. The chain is Ribonuclease R (rnr) from Escherichia coli (strain K12).